The primary structure comprises 727 residues: Probable acyl-activating enzyme 18, peroxisomal (727 aa).

Residues 725 to 727 (SRI) carry the Microbody targeting signal motif.

The protein belongs to the ATP-dependent AMP-binding enzyme family. In terms of tissue distribution, expressed in flowers.

The protein resides in the peroxisome. In terms of biological role, may be involved in the peroxisomal activation of 2,4-dichlorophenoxybutyric acid (2,4-DB), a precursor of active auxins that inhibit root growth. This is Probable acyl-activating enzyme 18, peroxisomal (AAE18) from Arabidopsis thaliana (Mouse-ear cress).